We begin with the raw amino-acid sequence, 199 residues long: Putative HMP/thiamine permease protein YkoE (199 aa).

6 helical membrane passes run 9 to 29 (IVIMSVISIVFAVVYLLFTHF), 40 to 60 (IAYEPIYGIWFIVSVIAAYMI), 63 to 83 (PGAALVSEIIAALVECLLGNP), 85 to 105 (GPMVIVIGIVQGLGAEAVFLA), 114 to 134 (PVLMLAGMGSSVASFIYDLFV), and 143 to 163 (GYLLIMLVIRLISGALLAGLL).

As to quaternary structure, the complex is composed of two ATP-binding proteins (YkoD), two transmembrane proteins (YkoC and YkoE) and a solute-binding protein (YkoF).

The protein localises to the cell membrane. Functionally, part of the ABC transporter complex YkoCDEF that could transport hydroxymethylpyrimidine (HMP) and/or thiamine. Could also transport other HMP-containing products. Probably responsible for the translocation of the substrate across the membrane. The protein is Putative HMP/thiamine permease protein YkoE (ykoE) of Bacillus subtilis (strain 168).